We begin with the raw amino-acid sequence, 216 residues long: Guanylate kinase (216 aa).

Positions 11–189 (GVLIVISGPS…AVKKIEAILL (179 aa)) constitute a Guanylate kinase-like domain. 18-25 (GPSGAGKG) lines the ATP pocket.

This sequence belongs to the guanylate kinase family.

The protein resides in the cytoplasm. It catalyses the reaction GMP + ATP = GDP + ADP. Its function is as follows. Essential for recycling GMP and indirectly, cGMP. This Clostridium perfringens (strain 13 / Type A) protein is Guanylate kinase (gmk).